We begin with the raw amino-acid sequence, 293 residues long: Acetylglutamate kinase (293 aa).

Substrate-binding positions include 65–66, Arg87, and Asn180; that span reads GG.

Belongs to the acetylglutamate kinase family. ArgB subfamily.

It is found in the cytoplasm. It catalyses the reaction N-acetyl-L-glutamate + ATP = N-acetyl-L-glutamyl 5-phosphate + ADP. It functions in the pathway amino-acid biosynthesis; L-arginine biosynthesis; N(2)-acetyl-L-ornithine from L-glutamate: step 2/4. Its function is as follows. Catalyzes the ATP-dependent phosphorylation of N-acetyl-L-glutamate. In Cereibacter sphaeroides (strain ATCC 17029 / ATH 2.4.9) (Rhodobacter sphaeroides), this protein is Acetylglutamate kinase.